The chain runs to 518 residues: Putative Rieske 2Fe-2S iron-sulfur protein MSMEG_6410/MSMEI_6242 (518 aa).

Lys-375 participates in a covalent cross-link: Isoglutamyl lysine isopeptide (Lys-Gln) (interchain with Q-Cter in protein Pup). Residues Leu-431 to Leu-518 form the Rieske domain. Residues Cys-471, His-473, Cys-491, and His-494 each contribute to the [2Fe-2S] cluster site.

It depends on [2Fe-2S] cluster as a cofactor.

The polypeptide is Putative Rieske 2Fe-2S iron-sulfur protein MSMEG_6410/MSMEI_6242 (Mycolicibacterium smegmatis (strain ATCC 700084 / mc(2)155) (Mycobacterium smegmatis)).